The following is a 252-amino-acid chain: Trans-aconitate 2-methyltransferase (252 aa).

It belongs to the methyltransferase superfamily. Tam family.

The protein localises to the cytoplasm. It carries out the reaction trans-aconitate + S-adenosyl-L-methionine = (E)-3-(methoxycarbonyl)pent-2-enedioate + S-adenosyl-L-homocysteine. Functionally, catalyzes the S-adenosylmethionine monomethyl esterification of trans-aconitate. In Escherichia coli O6:K15:H31 (strain 536 / UPEC), this protein is Trans-aconitate 2-methyltransferase.